A 285-amino-acid chain; its full sequence is Protease HtpX homolog (285 aa).

Transmembrane regions (helical) follow at residues 7–27 (TAML…MIGG) and 30–50 (GMTI…WFSD). Position 131 (His-131) interacts with Zn(2+). Glu-132 is an active-site residue. His-135 is a binding site for Zn(2+). A run of 2 helical transmembrane segments spans residues 146–166 (ITAT…FFGG) and 177–197 (IAGI…QMAI). A Zn(2+)-binding site is contributed by Glu-202.

This sequence belongs to the peptidase M48B family. Zn(2+) serves as cofactor.

The protein resides in the cell inner membrane. The protein is Protease HtpX homolog of Burkholderia cenocepacia (strain ATCC BAA-245 / DSM 16553 / LMG 16656 / NCTC 13227 / J2315 / CF5610) (Burkholderia cepacia (strain J2315)).